Consider the following 314-residue polypeptide: DNA-directed RNA polymerase subunit alpha (314 aa).

The interval 1–228 (MIEIEKPKIE…EHLNIFVGLT (228 aa)) is alpha N-terminal domain (alpha-NTD). Positions 245–314 (KEKVLEMTIE…ELGLGLRKDD (70 aa)) are alpha C-terminal domain (alpha-CTD).

Belongs to the RNA polymerase alpha chain family. As to quaternary structure, homodimer. The RNAP catalytic core consists of 2 alpha, 1 beta, 1 beta' and 1 omega subunit. When a sigma factor is associated with the core the holoenzyme is formed, which can initiate transcription.

It catalyses the reaction RNA(n) + a ribonucleoside 5'-triphosphate = RNA(n+1) + diphosphate. DNA-dependent RNA polymerase catalyzes the transcription of DNA into RNA using the four ribonucleoside triphosphates as substrates. The chain is DNA-directed RNA polymerase subunit alpha from Bacillus licheniformis (strain ATCC 14580 / DSM 13 / JCM 2505 / CCUG 7422 / NBRC 12200 / NCIMB 9375 / NCTC 10341 / NRRL NRS-1264 / Gibson 46).